The sequence spans 477 residues: Bifunctional protein HldE (477 aa).

The tract at residues 1–318 (MKVNLPAFER…ENAVRGRADT (318 aa)) is ribokinase. 195–198 (NLSE) lines the ATP pocket. D264 is a catalytic residue. A cytidylyltransferase region spans residues 344–477 (MTNGVFDILH…IKKIQTESEK (134 aa)).

In the N-terminal section; belongs to the carbohydrate kinase PfkB family. The protein in the C-terminal section; belongs to the cytidylyltransferase family. As to quaternary structure, homodimer.

The catalysed reaction is D-glycero-beta-D-manno-heptose 7-phosphate + ATP = D-glycero-beta-D-manno-heptose 1,7-bisphosphate + ADP + H(+). It catalyses the reaction D-glycero-beta-D-manno-heptose 1-phosphate + ATP + H(+) = ADP-D-glycero-beta-D-manno-heptose + diphosphate. The protein operates within nucleotide-sugar biosynthesis; ADP-L-glycero-beta-D-manno-heptose biosynthesis; ADP-L-glycero-beta-D-manno-heptose from D-glycero-beta-D-manno-heptose 7-phosphate: step 1/4. It functions in the pathway nucleotide-sugar biosynthesis; ADP-L-glycero-beta-D-manno-heptose biosynthesis; ADP-L-glycero-beta-D-manno-heptose from D-glycero-beta-D-manno-heptose 7-phosphate: step 3/4. Functionally, catalyzes the phosphorylation of D-glycero-D-manno-heptose 7-phosphate at the C-1 position to selectively form D-glycero-beta-D-manno-heptose-1,7-bisphosphate. In terms of biological role, catalyzes the ADP transfer from ATP to D-glycero-beta-D-manno-heptose 1-phosphate, yielding ADP-D-glycero-beta-D-manno-heptose. The polypeptide is Bifunctional protein HldE (Salmonella agona (strain SL483)).